We begin with the raw amino-acid sequence, 160 residues long: RTX-II toxin-activating lysine-acyltransferase ApxIIC (160 aa).

Active-site residues include His-23 and Asp-92.

It belongs to the RTX toxin acyltransferase family. As to quaternary structure, homodimer.

It is found in the cytoplasm. It catalyses the reaction a fatty acyl-[ACP] + L-lysyl-[protein] = N(6)-(fatty acyl)-L-lysyl-[protein] + holo-[ACP] + H(+). Protein-lysine acyltransferase that catalyzes fatty acylation of the protoxin, thereby converting it to the active toxin. The sequence is that of RTX-II toxin-activating lysine-acyltransferase ApxIIC (apxIIC) from Actinobacillus pleuropneumoniae (Haemophilus pleuropneumoniae).